The primary structure comprises 168 residues: Crossover junction endodeoxyribonuclease RuvC (168 aa).

Residues aspartate 11, glutamate 71, and aspartate 144 contribute to the active site. Residues aspartate 11, glutamate 71, and aspartate 144 each contribute to the Mg(2+) site.

The protein belongs to the RuvC family. As to quaternary structure, homodimer which binds Holliday junction (HJ) DNA. The HJ becomes 2-fold symmetrical on binding to RuvC with unstacked arms; it has a different conformation from HJ DNA in complex with RuvA. In the full resolvosome a probable DNA-RuvA(4)-RuvB(12)-RuvC(2) complex forms which resolves the HJ. Requires Mg(2+) as cofactor.

The protein localises to the cytoplasm. The catalysed reaction is Endonucleolytic cleavage at a junction such as a reciprocal single-stranded crossover between two homologous DNA duplexes (Holliday junction).. The RuvA-RuvB-RuvC complex processes Holliday junction (HJ) DNA during genetic recombination and DNA repair. Endonuclease that resolves HJ intermediates. Cleaves cruciform DNA by making single-stranded nicks across the HJ at symmetrical positions within the homologous arms, yielding a 5'-phosphate and a 3'-hydroxyl group; requires a central core of homology in the junction. The consensus cleavage sequence is 5'-(A/T)TT(C/G)-3'. Cleavage occurs on the 3'-side of the TT dinucleotide at the point of strand exchange. HJ branch migration catalyzed by RuvA-RuvB allows RuvC to scan DNA until it finds its consensus sequence, where it cleaves and resolves the cruciform DNA. The polypeptide is Crossover junction endodeoxyribonuclease RuvC (Protochlamydia amoebophila (strain UWE25)).